Reading from the N-terminus, the 80-residue chain is Raniseptin-4 (80 aa).

A signal peptide spans 1 to 22; it reads MAFLKKSLFLVLFLGIVSLSIC. A propeptide spanning residues 23-49 is cleaved from the precursor; it reads EEEKREGEEEEKQEEENEELSEEELRD.

Belongs to the frog skin active peptide (FSAP) family. Dermaseptin subfamily. Expressed by the skin glands.

Its subcellular location is the secreted. Functionally, has antibacterial activity. This is Raniseptin-4 from Boana raniceps (Chaco tree frog).